Consider the following 123-residue polypeptide: Small ribosomal subunit protein uS12 (123 aa).

The interval 11–32 (PRQEKTYREKARHLGASPQKRG) is disordered. D89 is modified (3-methylthioaspartic acid).

This sequence belongs to the universal ribosomal protein uS12 family. In terms of assembly, part of the 30S ribosomal subunit. Contacts proteins S8 and S17. May interact with IF1 in the 30S initiation complex.

In terms of biological role, with S4 and S5 plays an important role in translational accuracy. Functionally, interacts with and stabilizes bases of the 16S rRNA that are involved in tRNA selection in the A site and with the mRNA backbone. Located at the interface of the 30S and 50S subunits, it traverses the body of the 30S subunit contacting proteins on the other side and probably holding the rRNA structure together. The combined cluster of proteins S8, S12 and S17 appears to hold together the shoulder and platform of the 30S subunit. In Methylocella silvestris (strain DSM 15510 / CIP 108128 / LMG 27833 / NCIMB 13906 / BL2), this protein is Small ribosomal subunit protein uS12.